A 498-amino-acid chain; its full sequence is uncharacterized protein (498 aa).

11 consecutive transmembrane segments (helical) span residues 54 to 74 (LLKMDLVISPIIGFLYLMAFL), 100 to 120 (VAVSIFYVLYILVETPSVVLV), 128 to 148 (MLAFISFAWSMTVLFSGFMSS), 150 to 170 (GGLIATRLILGLLEGCLFPAL), 188 to 208 (SYLFASAGLAGAFGGLFAYAL), 221 to 241 (WIYIVEGLVSFIGVPLCLFAL), 302 to 322 (VLYGFSSFLPVIIKGLGFVGL), 326 to 346 (YMTIPVYIAGVISFLFVAWLS), 353 to 373 (AVYLISASTVVAVGYIIMLAS), 381 to 401 (TATYIIAIGCYIGPGLNLGWL), and 446 to 466 (AFTLGCVIVGGLAYVVMFFSL).

It belongs to the major facilitator superfamily. Allantoate permease family.

It is found in the membrane. This is an uncharacterized protein from Schizosaccharomyces pombe (strain 972 / ATCC 24843) (Fission yeast).